The following is a 286-amino-acid chain: Bifunctional protein FolD (286 aa).

NADP(+)-binding positions include 166-168 (GRS), Ser-191, and Ile-232.

This sequence belongs to the tetrahydrofolate dehydrogenase/cyclohydrolase family. As to quaternary structure, homodimer.

The catalysed reaction is (6R)-5,10-methylene-5,6,7,8-tetrahydrofolate + NADP(+) = (6R)-5,10-methenyltetrahydrofolate + NADPH. It catalyses the reaction (6R)-5,10-methenyltetrahydrofolate + H2O = (6R)-10-formyltetrahydrofolate + H(+). Its pathway is one-carbon metabolism; tetrahydrofolate interconversion. Functionally, catalyzes the oxidation of 5,10-methylenetetrahydrofolate to 5,10-methenyltetrahydrofolate and then the hydrolysis of 5,10-methenyltetrahydrofolate to 10-formyltetrahydrofolate. This chain is Bifunctional protein FolD, found in Herpetosiphon aurantiacus (strain ATCC 23779 / DSM 785 / 114-95).